A 155-amino-acid chain; its full sequence is Snaclec bothrojaracin subunit alpha (155 aa).

The first 23 residues, 1–23 (MGRFLFVSFGLLVVFLSLSGTAA), serve as a signal peptide directing secretion. Disulfide bonds link Cys-25-Cys-36, Cys-53-Cys-150, and Cys-125-Cys-142. The C-type lectin domain maps to 32–151 (HEGHCYKFFQ…CGQQNPFVCK (120 aa)).

Belongs to the snaclec family. As to quaternary structure, heterodimer of subunits alpha and beta; disulfide-linked. In terms of tissue distribution, expressed by the venom gland.

Its subcellular location is the secreted. In terms of biological role, this potent antithrombotic agent acts in a calcium-independent manner. Exerts its anticoagulant effect by two distinct mechanisms. It binds to activated thrombin through exosite 1, blocking fibrinogen clotting, platelet activation, factor V activation and other effects, and it interacts with prothrombin (F2), decreasing its proteolytic activation -especially in the presence of factor Va. In vivo, intravenous injection before thrombosis induction causes a significant decrease in thrombus weight. Furthermore, BJC shows a prolonged effect by remaining in the plasma bound to prothrombin for at least 12 hours. This is Snaclec bothrojaracin subunit alpha from Bothrops jararaca (Jararaca).